A 303-amino-acid chain; its full sequence is Protoheme IX farnesyltransferase (303 aa).

9 consecutive transmembrane segments (helical) span residues 26–46 (VVALMLLTSLIGMLLAVPGMV), 48–68 (IDILILGNLGIALCAGSAAAV), 98–118 (AILFAAILGLAGMAILMVWVN), 120–140 (LTAWLTLASLVGYAFIYTFWL), 148–168 (IVIGGLAGAAPPLLGWVAVTG), 174–194 (ALLLVLIIFAWTPPHFWALAV), 221–241 (ILLYTFILIAVTLLPYATHML), 244–264 (LYLLGAVVLGIGFLYYAVAMM), and 278–298 (YSIVYLMALFVVMLLDHYLLP).

Belongs to the UbiA prenyltransferase family. Protoheme IX farnesyltransferase subfamily.

The protein localises to the cell inner membrane. It catalyses the reaction heme b + (2E,6E)-farnesyl diphosphate + H2O = Fe(II)-heme o + diphosphate. The protein operates within porphyrin-containing compound metabolism; heme O biosynthesis; heme O from protoheme: step 1/1. In terms of biological role, converts heme B (protoheme IX) to heme O by substitution of the vinyl group on carbon 2 of heme B porphyrin ring with a hydroxyethyl farnesyl side group. The polypeptide is Protoheme IX farnesyltransferase (Saccharophagus degradans (strain 2-40 / ATCC 43961 / DSM 17024)).